The following is a 212-amino-acid chain: ATP phosphoribosyltransferase (212 aa).

Belongs to the ATP phosphoribosyltransferase family. Short subfamily. In terms of assembly, heteromultimer composed of HisG and HisZ subunits.

Its subcellular location is the cytoplasm. The catalysed reaction is 1-(5-phospho-beta-D-ribosyl)-ATP + diphosphate = 5-phospho-alpha-D-ribose 1-diphosphate + ATP. Its pathway is amino-acid biosynthesis; L-histidine biosynthesis; L-histidine from 5-phospho-alpha-D-ribose 1-diphosphate: step 1/9. Its function is as follows. Catalyzes the condensation of ATP and 5-phosphoribose 1-diphosphate to form N'-(5'-phosphoribosyl)-ATP (PR-ATP). Has a crucial role in the pathway because the rate of histidine biosynthesis seems to be controlled primarily by regulation of HisG enzymatic activity. This chain is ATP phosphoribosyltransferase, found in Clostridium botulinum (strain Okra / Type B1).